We begin with the raw amino-acid sequence, 118 residues long: UPF0329 protein ECU03_0030/ECU05_0040/ECU06_0010/ECU06_1710/ECU11_0010 (118 aa).

It belongs to the UPF0329 family.

This is UPF0329 protein ECU03_0030/ECU05_0040/ECU06_0010/ECU06_1710/ECU11_0010 from Encephalitozoon cuniculi (strain GB-M1) (Microsporidian parasite).